Here is a 72-residue protein sequence, read N- to C-terminus: Large ribosomal subunit protein bL28 (72 aa).

This sequence belongs to the bacterial ribosomal protein bL28 family.

This is Large ribosomal subunit protein bL28 from Chlorobium luteolum (strain DSM 273 / BCRC 81028 / 2530) (Pelodictyon luteolum).